Here is a 179-residue protein sequence, read N- to C-terminus: Trypsin inhibitor (179 aa).

Position 1 is a pyrrolidone carboxylic acid (Gln1). Intrachain disulfides connect Cys40-Cys85 and Cys132-Cys143.

It belongs to the protease inhibitor I3 (leguminous Kunitz-type inhibitor) family. Heterodimer of an alpha and a beta chain linked by a disulfide bond. In terms of tissue distribution, abundant in dry seeds.

The protein resides in the secreted. Functionally, inhibits trypsin, plasmin, human plasma kallikrein, chymotrypsin and factor XIIa activity. This is Trypsin inhibitor from Leucaena leucocephala (White popinac).